The sequence spans 371 residues: Dihydroorotate dehydrogenase (quinone) (371 aa).

FMN-binding positions include 79-83 (AGFDK) and threonine 103. Residue lysine 83 coordinates substrate. 128 to 132 (NRMGF) contacts substrate. FMN-binding residues include asparagine 156 and asparagine 189. Position 189 (asparagine 189) interacts with substrate. Serine 192 functions as the Nucleophile in the catalytic mechanism. Asparagine 194 contacts substrate. FMN-binding residues include lysine 225 and threonine 253. 254–255 (NT) contacts substrate. FMN-binding positions include glycine 279, glycine 308, and 329–330 (YT).

The protein belongs to the dihydroorotate dehydrogenase family. Type 2 subfamily. In terms of assembly, monomer. Requires FMN as cofactor.

The protein localises to the cell membrane. The enzyme catalyses (S)-dihydroorotate + a quinone = orotate + a quinol. The protein operates within pyrimidine metabolism; UMP biosynthesis via de novo pathway; orotate from (S)-dihydroorotate (quinone route): step 1/1. Functionally, catalyzes the conversion of dihydroorotate to orotate with quinone as electron acceptor. The sequence is that of Dihydroorotate dehydrogenase (quinone) from Corynebacterium glutamicum (strain ATCC 13032 / DSM 20300 / JCM 1318 / BCRC 11384 / CCUG 27702 / LMG 3730 / NBRC 12168 / NCIMB 10025 / NRRL B-2784 / 534).